The sequence spans 524 residues: DEAD-box ATP-dependent RNA helicase CshA (524 aa).

Residues 1 to 29 (MKFNELNLSADLLAEIEKAGFVEASPIQE) carry the Q motif motif. The 171-residue stretch at 32 to 202 (IPLALEGKDV…VQFMKAPEHV (171 aa)) folds into the Helicase ATP-binding domain. Residue 45-52 (AQTGTGKT) participates in ATP binding. Residues 150-153 (DEAD) carry the DEAD box motif. The 161-residue stretch at 213–373 (LVDQYYIRVK…GLKPASVEES (161 aa)) folds into the Helicase C-terminal domain. Positions 440–524 (EKPLPFKPSG…GFVIRNKGDK (85 aa)) are disordered. The segment covering 463–498 (RRGDDRRERDRRGNGRRDEFKKGSRGNDRFDKEKRY) has biased composition (basic and acidic residues).

The protein belongs to the DEAD box helicase family. CshA subfamily. As to quaternary structure, oligomerizes, may be a member of the RNA degradosome.

Its subcellular location is the cytoplasm. The enzyme catalyses ATP + H2O = ADP + phosphate + H(+). Functionally, DEAD-box RNA helicase possibly involved in RNA degradation. Unwinds dsRNA in both 5'- and 3'-directions, has RNA-dependent ATPase activity. This chain is DEAD-box ATP-dependent RNA helicase CshA, found in Streptococcus pneumoniae serotype 4 (strain ATCC BAA-334 / TIGR4).